We begin with the raw amino-acid sequence, 334 residues long: Formamidase (334 aa).

The region spanning 14–260 (FLVAAIQFPV…WEIVTGEIYP (247 aa)) is the CN hydrolase domain. The Proton acceptor role is filled by E60. K133 functions as the Proton donor in the catalytic mechanism. The Nucleophile role is filled by C166.

The protein belongs to the carbon-nitrogen hydrolase superfamily. Aliphatic amidase family.

The catalysed reaction is formamide + H2O = formate + NH4(+). In terms of biological role, is an aliphatic amidase with a restricted substrate specificity, as it only hydrolyzes formamide. This Helicobacter pylori (strain P12) protein is Formamidase.